Here is a 464-residue protein sequence, read N- to C-terminus: Ribosomal protein uS12 methylthiotransferase RimO (464 aa).

The region spanning 14–125 (PTVAFAHLGC…IVEVLQRVEA (112 aa)) is the MTTase N-terminal domain. Residues Cys-23, Cys-59, Cys-88, Cys-163, Cys-167, and Cys-170 each contribute to the [4Fe-4S] cluster site. The Radical SAM core domain maps to 149 to 378 (TTDQAVAFLK…MALQQPISAE (230 aa)). The TRAM domain occupies 381-452 (HSWVSRTVDV…VYDLSGRIVG (72 aa)).

The protein belongs to the methylthiotransferase family. RimO subfamily. [4Fe-4S] cluster serves as cofactor.

It localises to the cytoplasm. It catalyses the reaction L-aspartate(89)-[ribosomal protein uS12]-hydrogen + (sulfur carrier)-SH + AH2 + 2 S-adenosyl-L-methionine = 3-methylsulfanyl-L-aspartate(89)-[ribosomal protein uS12]-hydrogen + (sulfur carrier)-H + 5'-deoxyadenosine + L-methionine + A + S-adenosyl-L-homocysteine + 2 H(+). In terms of biological role, catalyzes the methylthiolation of an aspartic acid residue of ribosomal protein uS12. This Parasynechococcus marenigrum (strain WH8102) protein is Ribosomal protein uS12 methylthiotransferase RimO.